The sequence spans 336 residues: UDP-N-acetylglucosamine--N-acetylmuramyl-(pentapeptide) pyrophosphoryl-undecaprenol N-acetylglucosamine transferase (336 aa).

UDP-N-acetyl-alpha-D-glucosamine is bound by residues 10–12 (TGG), Asn124, Arg157, Ser179, and Gln277.

This sequence belongs to the glycosyltransferase 28 family. MurG subfamily.

It is found in the cell inner membrane. The catalysed reaction is di-trans,octa-cis-undecaprenyl diphospho-N-acetyl-alpha-D-muramoyl-L-alanyl-D-glutamyl-meso-2,6-diaminopimeloyl-D-alanyl-D-alanine + UDP-N-acetyl-alpha-D-glucosamine = di-trans,octa-cis-undecaprenyl diphospho-[N-acetyl-alpha-D-glucosaminyl-(1-&gt;4)]-N-acetyl-alpha-D-muramoyl-L-alanyl-D-glutamyl-meso-2,6-diaminopimeloyl-D-alanyl-D-alanine + UDP + H(+). The protein operates within cell wall biogenesis; peptidoglycan biosynthesis. Its function is as follows. Cell wall formation. Catalyzes the transfer of a GlcNAc subunit on undecaprenyl-pyrophosphoryl-MurNAc-pentapeptide (lipid intermediate I) to form undecaprenyl-pyrophosphoryl-MurNAc-(pentapeptide)GlcNAc (lipid intermediate II). This is UDP-N-acetylglucosamine--N-acetylmuramyl-(pentapeptide) pyrophosphoryl-undecaprenol N-acetylglucosamine transferase from Wolinella succinogenes (strain ATCC 29543 / DSM 1740 / CCUG 13145 / JCM 31913 / LMG 7466 / NCTC 11488 / FDC 602W) (Vibrio succinogenes).